We begin with the raw amino-acid sequence, 164 residues long: Photosystem II extrinsic protein V (164 aa).

Positions 1–27 (MALKSKFLVGSILATFILNGFSSPAQA) are cleaved as a signal peptide. Heme c-binding residues include Cys-64, Cys-67, His-68, and His-119.

The protein belongs to the cytochrome c family. PsbV subfamily. In terms of assembly, PSII is composed of 1 copy each of membrane proteins PsbA, PsbB, PsbC, PsbD, PsbE, PsbF, PsbH, PsbI, PsbJ, PsbK, PsbL, PsbM, PsbT, PsbY, PsbZ, Psb30/Ycf12, at least 3 peripheral proteins of the oxygen-evolving complex and a large number of cofactors. It forms dimeric complexes. Heme c is required as a cofactor.

It is found in the plastid. The protein resides in the chloroplast thylakoid membrane. One of the extrinsic, lumenal subunits of photosystem II (PSII). PSII is a light-driven water plastoquinone oxidoreductase, using light energy to abstract electrons from H(2)O, generating a proton gradient subsequently used for ATP formation. The extrinsic proteins stabilize the structure of photosystem II oxygen-evolving complex (OEC), the ion environment of oxygen evolution and protect the OEC against heat-induced inactivation. This is Photosystem II extrinsic protein V from Emiliania huxleyi (Coccolithophore).